The chain runs to 361 residues: Diacylglycerol O-acyltransferase 2 (361 aa).

The Cytoplasmic segment spans residues 1–42; it reads MKTLIAAYSGVLRGTGSSILSALQDLFSVTWLNRAKVEKQLQ. The chain crosses the membrane as a helical span at residues 43–61; sequence VISVLQWVLSFLVLGVACS. The Lumenal segment spans residues 62-65; the sequence is VILM. Residues 66 to 85 traverse the membrane as a helical segment; the sequence is YTFCTDCWLIAVLYFTWLVF. Residues 86–361 lie on the Cytoplasmic side of the membrane; that stretch reads DWNTPKKGGR…LPETEVLEVN (276 aa).

This sequence belongs to the diacylglycerol acyltransferase family. As to quaternary structure, forms multimeric complexes consisting of several DGAT2 subunits. Interacts with SLC27A1 and this interaction is enhanced in the presence of ZFYVE1.

It is found in the endoplasmic reticulum membrane. The protein resides in the lipid droplet. The protein localises to the cytoplasm. It localises to the perinuclear region. It catalyses the reaction an acyl-CoA + a 1,2-diacyl-sn-glycerol = a triacyl-sn-glycerol + CoA. The catalysed reaction is all-trans-retinol + an acyl-CoA = an all-trans-retinyl ester + CoA. The enzyme catalyses 2-(9Z-octadecenoyl)-glycerol + (9Z)-octadecenoyl-CoA = 1,2-di-(9Z-octadecenoyl)-sn-glycerol + CoA. It carries out the reaction 1,2-di-(9Z-octadecenoyl)-sn-glycerol + (9Z)-octadecenoyl-CoA = 1,2,3-tri-(9Z-octadecenoyl)-glycerol + CoA. It catalyses the reaction all-trans-retinol + hexadecanoyl-CoA = all-trans-retinyl hexadecanoate + CoA. The catalysed reaction is 1-O-(9Z-octadecenyl)-glycerol + (9Z)-octadecenoyl-CoA = 1-O-(9Z-octadecyl)-3-(9Z-octadecenoyl)-glycerol + CoA. The enzyme catalyses 1-(9Z-octadecenoyl)-glycerol + (9Z)-octadecenoyl-CoA = 1,2-di-(9Z-octadecenoyl)-glycerol + CoA. It carries out the reaction 1,2-di-(9Z-octadecenoyl)-sn-glycerol + hexadecanoyl-CoA = 1,2-di-(9Z)-octadecenoyl-3-hexadecanoyl-sn-glycerol + CoA. It catalyses the reaction 1,3-di-(9Z-octadecenoyl)-glycerol + (9Z)-octadecenoyl-CoA = 1,2,3-tri-(9Z-octadecenoyl)-glycerol + CoA. The catalysed reaction is 2,3-di-(9Z)-octadecenoyl-sn-glycerol + (9Z)-octadecenoyl-CoA = 1,2,3-tri-(9Z-octadecenoyl)-glycerol + CoA. The enzyme catalyses 2-(9Z-octadecenoyl)-glycerol + hexadecanoyl-CoA = 1-hexadecanoyl-2-(9Z-octadecenoyl)-sn-glycerol + CoA. Its pathway is glycerolipid metabolism; triacylglycerol biosynthesis. Its activity is regulated as follows. Inhibited by niacin. Essential acyltransferase that catalyzes the terminal and only committed step in triacylglycerol synthesis by using diacylglycerol and fatty acyl CoA as substrates. Required for synthesis and storage of intracellular triglycerides. Probably plays a central role in cytosolic lipid accumulation. In liver, is primarily responsible for incorporating endogenously synthesized fatty acids into triglycerides. Also functions as an acyl-CoA retinol acyltransferase (ARAT). Also able to use 1-monoalkylglycerol (1-MAkG) as an acyl acceptor for the synthesis of monoalkyl-monoacylglycerol (MAMAG). The protein is Diacylglycerol O-acyltransferase 2 (DGAT2) of Bos taurus (Bovine).